The following is a 334-amino-acid chain: Glycerol-3-phosphate dehydrogenase [NAD(P)+] (334 aa).

NADPH-binding residues include Trp-13, Arg-33, and Lys-106. Sn-glycerol 3-phosphate contacts are provided by Lys-106, Gly-137, and Ser-139. Ala-141 is a binding site for NADPH. Lys-192, Asp-245, Ser-255, Arg-256, and Asn-257 together coordinate sn-glycerol 3-phosphate. The active-site Proton acceptor is Lys-192. An NADPH-binding site is contributed by Arg-256. Val-280 and Glu-282 together coordinate NADPH.

The protein belongs to the NAD-dependent glycerol-3-phosphate dehydrogenase family.

The protein localises to the cytoplasm. The enzyme catalyses sn-glycerol 3-phosphate + NAD(+) = dihydroxyacetone phosphate + NADH + H(+). It catalyses the reaction sn-glycerol 3-phosphate + NADP(+) = dihydroxyacetone phosphate + NADPH + H(+). It functions in the pathway membrane lipid metabolism; glycerophospholipid metabolism. Its function is as follows. Catalyzes the reduction of the glycolytic intermediate dihydroxyacetone phosphate (DHAP) to sn-glycerol 3-phosphate (G3P), the key precursor for phospholipid synthesis. This is Glycerol-3-phosphate dehydrogenase [NAD(P)+] from Chlamydia felis (strain Fe/C-56) (Chlamydophila felis).